A 484-amino-acid chain; its full sequence is tRNA sulfurtransferase (484 aa).

One can recognise a THUMP domain in the interval 62–166 (GPVIDELVRI…DDSYHIAHRR (105 aa)). ATP is bound by residues 184-185 (LI), K266, G288, and Q297. A disulfide bond links C345 and C456. The Rhodanese domain maps to 404 to 482 (PSVDDVIIDV…GHGNIKVYAP (79 aa)). The active-site Cysteine persulfide intermediate is C456.

This sequence belongs to the ThiI family.

The protein localises to the cytoplasm. The catalysed reaction is [ThiI sulfur-carrier protein]-S-sulfanyl-L-cysteine + a uridine in tRNA + 2 reduced [2Fe-2S]-[ferredoxin] + ATP + H(+) = [ThiI sulfur-carrier protein]-L-cysteine + a 4-thiouridine in tRNA + 2 oxidized [2Fe-2S]-[ferredoxin] + AMP + diphosphate. The enzyme catalyses [ThiS sulfur-carrier protein]-C-terminal Gly-Gly-AMP + S-sulfanyl-L-cysteinyl-[cysteine desulfurase] + AH2 = [ThiS sulfur-carrier protein]-C-terminal-Gly-aminoethanethioate + L-cysteinyl-[cysteine desulfurase] + A + AMP + 2 H(+). The protein operates within cofactor biosynthesis; thiamine diphosphate biosynthesis. Functionally, catalyzes the ATP-dependent transfer of a sulfur to tRNA to produce 4-thiouridine in position 8 of tRNAs, which functions as a near-UV photosensor. Also catalyzes the transfer of sulfur to the sulfur carrier protein ThiS, forming ThiS-thiocarboxylate. This is a step in the synthesis of thiazole, in the thiamine biosynthesis pathway. The sulfur is donated as persulfide by IscS. This chain is tRNA sulfurtransferase, found in Marinobacter nauticus (strain ATCC 700491 / DSM 11845 / VT8) (Marinobacter aquaeolei).